The following is a 372-amino-acid chain: uncharacterized protein (372 aa).

A helical membrane pass occupies residues 224–244 (GSTVGVVIGVVIVIFIGFIII). Serine 329 is modified (phosphoserine).

Its subcellular location is the vacuole membrane. This is an uncharacterized protein from Saccharomyces cerevisiae (strain ATCC 204508 / S288c) (Baker's yeast).